A 2169-amino-acid polypeptide reads, in one-letter code: Protein sidekick-1 (2169 aa).

Residues 1 to 50 (MVGRKVDREIIARRNSRRDGMMMKLNFCFFFCRRWWAFLLLQLHMLQALA) form the signal peptide. Over 51–1961 (QDDVAPYFKT…TEAPFYEEWW (1911 aa)) the chain is Extracellular. Ig-like C2-type domains lie at 56–138 (PYFK…SEVQ), 143–229 (GNFM…SPLI), 245–333 (PIIV…AFIS), 338–428 (PYFT…LDVT), and 432–521 (PAFI…VMLT). C78 and C121 form a disulfide bridge. 3 N-linked (GlcNAc...) asparagine glycosylation sites follow: N93, N223, and N253. Intrachain disulfides connect C267–C314, C360–C410, and C453–C505. N-linked (GlcNAc...) asparagine glycosylation is found at N502, N524, and N534. One can recognise an Ig-like C2-type 6 domain in the interval 525 to 615 (RTFIVHPPEN…GNDSRMARLE (91 aa)). A disulfide bond links C547 and C599. Residues N607, N631, N734, N773, N834, N967, and N977 are each glycosylated (N-linked (GlcNAc...) asparagine). Fibronectin type-III domains follow at residues 622–718 (SPQN…LPEE), 723–819 (PPKN…TLQG), 824–922 (PPQN…TLED), 926–1020 (AVGH…VPPE), 1024–1123 (APSN…TLQA), 1128–1226 (APGS…TRES), 1231–1328 (PPEN…TKDD), 1332–1426 (PPIR…TEKR), 1431–1528 (PPQQ…TLQD), 1533–1651 (PPSS…VGEA), 1656–1752 (APQN…THQA), 1756–1851 (APSF…AGPA), and 1854–1955 (SPGS…TEAP). N-linked (GlcNAc...) asparagine glycosylation is found at N1234 and N1285. The segment at 1423–1443 (TEKRERPAPPQQLTTPQSDVS) is disordered. Residues 1433–1443 (QQLTTPQSDVS) are compositionally biased toward polar residues. N-linked (GlcNAc...) asparagine glycosylation is found at N1606, N1700, N1719, N1771, and N1845. Residues 1962-1982 (FLLVMALSSLILILLVVFALV) traverse the membrane as a helical segment. Residues 1983 to 2169 (LHGQSKKYKN…TPVTGFSSFV (187 aa)) lie on the Cytoplasmic side of the membrane. 2 disordered regions span residues 2028–2050 (TFSK…HYSD) and 2145–2169 (GGVY…SSFV). Polar residues predominate over residues 2160 to 2169 (TPVTGFSSFV). The PDZ-binding motif lies at 2163-2169 (TGFSSFV).

The protein belongs to the sidekick family. In terms of assembly, homodimer; mediates homophilic interactions to promote cell adhesion. Expressed by non-overlapping subsets of retinal neurons. SDK1, SDK2, DSCAM and DSCAML1 are expressed in non-overlapping subsets of interneurons and retinal ganglion cells (RGCs) that form synapses in distinct inner plexiform layer (IPL) sublaminae.

It is found in the cell membrane. Its subcellular location is the synapse. Adhesion molecule that promotes lamina-specific synaptic connections in the retina. Expressed in specific subsets of interneurons and retinal ganglion cells (RGCs) and promotes synaptic connectivity via homophilic interactions. In Gallus gallus (Chicken), this protein is Protein sidekick-1.